Reading from the N-terminus, the 269-residue chain is Indole-3-glycerol phosphate synthase (269 aa).

Belongs to the TrpC family.

It carries out the reaction 1-(2-carboxyphenylamino)-1-deoxy-D-ribulose 5-phosphate + H(+) = (1S,2R)-1-C-(indol-3-yl)glycerol 3-phosphate + CO2 + H2O. Its pathway is amino-acid biosynthesis; L-tryptophan biosynthesis; L-tryptophan from chorismate: step 4/5. This is Indole-3-glycerol phosphate synthase from Rhodococcus opacus (strain B4).